A 314-amino-acid polypeptide reads, in one-letter code: MNLIFAKVLCLLAILVLMMLGSLIPVKISEADFDKSSRSRKILSLSNSFAGGVFLATCFNALLPAVREKFFDLLKIGNISTDYPLAETIMMVGFFLTVFVEQTVMTFRKEKPSFIDMETFNAGSDIGSDSEFESPFISANHGHNLYEGGHSHHSHSLNIKELSSSSPIRLFSLVFALSAHSVFEGLALGLQEDGNKLLSLFIGVVIHETLVAMALGVSMAKVNTHLKDAIKMAVLVSTMIPIGIVVGMAIQSAQNMASSIASALLQGIAGGTFIFVTFFEILVKELEEKNDRLLKVLFLVLGYTVLAVLVLFKW.

The Extracellular segment spans residues 1–3 (MNL). Residues 4 to 24 (IFAKVLCLLAILVLMMLGSLI) form a helical membrane-spanning segment. At 25–41 (PVKISEADFDKSSRSRK) the chain is on the cytoplasmic side. The helical transmembrane segment at 42-62 (ILSLSNSFAGGVFLATCFNAL) threads the bilayer. The Extracellular segment spans residues 63-84 (LPAVREKFFDLLKIGNISTDYP). A helical membrane pass occupies residues 85–105 (LAETIMMVGFFLTVFVEQTVM). Over 106-169 (TFRKEKPSFI…KELSSSSPIR (64 aa)) the chain is Cytoplasmic. A helical transmembrane segment spans residues 170–190 (LFSLVFALSAHSVFEGLALGL). At 191–196 (QEDGNK) the chain is on the extracellular side. Residues 197–217 (LLSLFIGVVIHETLVAMALGV) form a helical membrane-spanning segment. Residues 218–229 (SMAKVNTHLKDA) are Cytoplasmic-facing. A helical transmembrane segment spans residues 230–250 (IKMAVLVSTMIPIGIVVGMAI). Residues 251–262 (QSAQNMASSIAS) lie on the Extracellular side of the membrane. A helical membrane pass occupies residues 263-283 (ALLQGIAGGTFIFVTFFEILV). The Cytoplasmic segment spans residues 284–292 (KELEEKNDR). A helical transmembrane segment spans residues 293 to 313 (LLKVLFLVLGYTVLAVLVLFK). Position 314 (Trp314) is a topological domain, extracellular.

The protein belongs to the ZIP transporter (TC 2.A.5) family.

The protein resides in the cell membrane. It is found in the apical cell membrane. The enzyme catalyses Zn(2+)(in) = Zn(2+)(out). Functionally, transporter for the divalent cation Zn(2+). Mediates the influx of Zn(2+) into cells from extracellular space. The sequence is that of Zinc transporter ZIP3 (slc39a3) from Xenopus tropicalis (Western clawed frog).